The primary structure comprises 311 residues: Malate dehydrogenase (311 aa).

NAD(+) contacts are provided by residues glycine 7 to glycine 13 and aspartate 34. 2 residues coordinate substrate: arginine 81 and arginine 87. NAD(+)-binding positions include asparagine 94 and isoleucine 117–asparagine 119. Substrate-binding residues include asparagine 119 and arginine 153. Histidine 177 acts as the Proton acceptor in catalysis. Methionine 227 contributes to the NAD(+) binding site.

This sequence belongs to the LDH/MDH superfamily. MDH type 1 family. In terms of assembly, homodimer.

The enzyme catalyses (S)-malate + NAD(+) = oxaloacetate + NADH + H(+). Functionally, catalyzes the reversible oxidation of malate to oxaloacetate. This is Malate dehydrogenase from Aliivibrio fischeri (strain MJ11) (Vibrio fischeri).